The following is a 316-amino-acid chain: Transaldolase (316 aa).

The Schiff-base intermediate with substrate role is filled by Lys-132.

Belongs to the transaldolase family. Type 1 subfamily.

Its subcellular location is the cytoplasm. The catalysed reaction is D-sedoheptulose 7-phosphate + D-glyceraldehyde 3-phosphate = D-erythrose 4-phosphate + beta-D-fructose 6-phosphate. Its pathway is carbohydrate degradation; pentose phosphate pathway; D-glyceraldehyde 3-phosphate and beta-D-fructose 6-phosphate from D-ribose 5-phosphate and D-xylulose 5-phosphate (non-oxidative stage): step 2/3. In terms of biological role, transaldolase is important for the balance of metabolites in the pentose-phosphate pathway. This is Transaldolase from Vibrio cholerae serotype O1 (strain ATCC 39315 / El Tor Inaba N16961).